The sequence spans 310 residues: Malate dehydrogenase (310 aa).

Residues 7-13 and aspartate 34 contribute to the NAD(+) site; that span reads GAAGGIG. Residues arginine 81 and arginine 87 each contribute to the substrate site. NAD(+)-binding positions include asparagine 94 and 117 to 119; that span reads ITN. Positions 119 and 153 each coordinate substrate. Histidine 177 functions as the Proton acceptor in the catalytic mechanism. An NAD(+)-binding site is contributed by methionine 227.

This sequence belongs to the LDH/MDH superfamily. MDH type 1 family. In terms of assembly, homodimer.

The enzyme catalyses (S)-malate + NAD(+) = oxaloacetate + NADH + H(+). Its function is as follows. Catalyzes the reversible oxidation of malate to oxaloacetate. This Vibrio vulnificus (strain YJ016) protein is Malate dehydrogenase.